The primary structure comprises 273 residues: NADPH-dependent 7-cyano-7-deazaguanine reductase (273 aa).

81–83 (VES) provides a ligand contact to substrate. Residue 83-84 (SK) coordinates NADPH. The active-site Thioimide intermediate is the Cys-179. Asp-186 acts as the Proton donor in catalysis. 218–219 (AE) is a substrate binding site. Position 247–248 (247–248 (RG)) interacts with NADPH.

This sequence belongs to the GTP cyclohydrolase I family. QueF type 2 subfamily. As to quaternary structure, homodimer.

The protein resides in the cytoplasm. The enzyme catalyses 7-aminomethyl-7-carbaguanine + 2 NADP(+) = 7-cyano-7-deazaguanine + 2 NADPH + 3 H(+). It participates in tRNA modification; tRNA-queuosine biosynthesis. Functionally, catalyzes the NADPH-dependent reduction of 7-cyano-7-deazaguanine (preQ0) to 7-aminomethyl-7-deazaguanine (preQ1). The sequence is that of NADPH-dependent 7-cyano-7-deazaguanine reductase from Rickettsia bellii (strain OSU 85-389).